The following is a 311-amino-acid chain: Porphobilinogen deaminase (311 aa).

At Cys-241 the chain carries S-(dipyrrolylmethanemethyl)cysteine.

This sequence belongs to the HMBS family. As to quaternary structure, monomer. It depends on dipyrromethane as a cofactor.

The catalysed reaction is 4 porphobilinogen + H2O = hydroxymethylbilane + 4 NH4(+). It functions in the pathway porphyrin-containing compound metabolism; protoporphyrin-IX biosynthesis; coproporphyrinogen-III from 5-aminolevulinate: step 2/4. Functionally, tetrapolymerization of the monopyrrole PBG into the hydroxymethylbilane pre-uroporphyrinogen in several discrete steps. The protein is Porphobilinogen deaminase of Campylobacter curvus (strain 525.92).